The primary structure comprises 219 residues: MNKEKAIVVFSGGQDSTTCLFWAKKKYKEVIAVSFDYNQKHKLELDCAKDICKKYNIEHHILDLNLLNQLAPNSLTRQDITVDKSAPKEGVPNSFVDGRNLLFLSFVAVFAKQKGINTIITGVSQSDFSGYPDCRDVFIKSLNVTLNLAMDYEFEIITPLMWINKAETWKMAYDLGVLDIVKEETLTCYNGIKADGCGECPACKLRKKGYWEFEKEYLK.

Residue 10–20 coordinates ATP; that stretch reads FSGGQDSTTCL. Residues C188, C197, C200, and C203 each coordinate Zn(2+).

The protein belongs to the QueC family. In terms of assembly, homodimer. It depends on Zn(2+) as a cofactor.

The enzyme catalyses 7-carboxy-7-deazaguanine + NH4(+) + ATP = 7-cyano-7-deazaguanine + ADP + phosphate + H2O + H(+). The protein operates within purine metabolism; 7-cyano-7-deazaguanine biosynthesis. Catalyzes the ATP-dependent conversion of 7-carboxy-7-deazaguanine (CDG) to 7-cyano-7-deazaguanine (preQ(0)). In Clostridium botulinum (strain ATCC 19397 / Type A), this protein is 7-cyano-7-deazaguanine synthase.